The sequence spans 629 residues: Phosphomethylpyrimidine synthase (629 aa).

Substrate-binding positions include asparagine 215, methionine 244, tyrosine 273, histidine 309, 329–331, 370–373, and glutamate 409; these read SRG and DGLR. Residue histidine 413 participates in Zn(2+) binding. Residue tyrosine 436 participates in substrate binding. Residue histidine 477 coordinates Zn(2+). 3 residues coordinate [4Fe-4S] cluster: cysteine 557, cysteine 560, and cysteine 565. The interval 589–610 is disordered; it reads ENIKRETSAEEAEEAREGMSDM.

This sequence belongs to the ThiC family. Homodimer. [4Fe-4S] cluster is required as a cofactor.

The enzyme catalyses 5-amino-1-(5-phospho-beta-D-ribosyl)imidazole + S-adenosyl-L-methionine = 4-amino-2-methyl-5-(phosphooxymethyl)pyrimidine + CO + 5'-deoxyadenosine + formate + L-methionine + 3 H(+). It participates in cofactor biosynthesis; thiamine diphosphate biosynthesis. In terms of biological role, catalyzes the synthesis of the hydroxymethylpyrimidine phosphate (HMP-P) moiety of thiamine from aminoimidazole ribotide (AIR) in a radical S-adenosyl-L-methionine (SAM)-dependent reaction. The polypeptide is Phosphomethylpyrimidine synthase (Erythrobacter litoralis (strain HTCC2594)).